A 205-amino-acid polypeptide reads, in one-letter code: Large ribosomal subunit protein uL18 (205 aa).

This sequence belongs to the universal ribosomal protein uL18 family. Part of the 50S ribosomal subunit. Contacts the 5S and 23S rRNAs.

Functionally, this is one of the proteins that bind and probably mediate the attachment of the 5S RNA into the large ribosomal subunit, where it forms part of the central protuberance. The sequence is that of Large ribosomal subunit protein uL18 from Pyrobaculum islandicum (strain DSM 4184 / JCM 9189 / GEO3).